We begin with the raw amino-acid sequence, 416 residues long: Peptide chain release factor subunit 1 (416 aa).

Belongs to the eukaryotic release factor 1 family. In terms of assembly, heterodimer of two subunits, one of which binds GTP.

Its subcellular location is the cytoplasm. Its function is as follows. Directs the termination of nascent peptide synthesis (translation) in response to the termination codons UAA, UAG and UGA. This chain is Peptide chain release factor subunit 1, found in Halorubrum lacusprofundi (strain ATCC 49239 / DSM 5036 / JCM 8891 / ACAM 34).